A 221-amino-acid polypeptide reads, in one-letter code: Germin-like protein subfamily 1 member 19 (221 aa).

Residues Met1 to Ala21 form the signal peptide. An intrachain disulfide couples Cys31 to Cys48. In terms of domain architecture, Cupin type-1 spans Ser76 to Lys213. Asn77 carries an N-linked (GlcNAc...) asparagine glycan. Positions 110, 112, 117, and 159 each coordinate Mn(2+).

Belongs to the germin family. As to quaternary structure, oligomer (believed to be a pentamer but probably hexamer).

Its subcellular location is the secreted. It localises to the extracellular space. The protein resides in the apoplast. In terms of biological role, may play a role in plant defense. Probably has no oxalate oxidase activity even if the active site is conserved. This Arabidopsis thaliana (Mouse-ear cress) protein is Germin-like protein subfamily 1 member 19.